Reading from the N-terminus, the 233-residue chain is tRNA (guanine-N(1)-)-methyltransferase (233 aa).

Residues glycine 110 and isoleucine 130–methionine 135 each bind S-adenosyl-L-methionine.

It belongs to the RNA methyltransferase TrmD family. In terms of assembly, homodimer.

It localises to the cytoplasm. The catalysed reaction is guanosine(37) in tRNA + S-adenosyl-L-methionine = N(1)-methylguanosine(37) in tRNA + S-adenosyl-L-homocysteine + H(+). Specifically methylates guanosine-37 in various tRNAs. The polypeptide is tRNA (guanine-N(1)-)-methyltransferase (Finegoldia magna (strain ATCC 29328 / DSM 20472 / WAL 2508) (Peptostreptococcus magnus)).